A 365-amino-acid polypeptide reads, in one-letter code: DNA replication and repair protein RecF (365 aa).

Position 30–37 (30–37 (GRNAQGKT)) interacts with ATP.

Belongs to the RecF family.

It localises to the cytoplasm. Its function is as follows. The RecF protein is involved in DNA metabolism; it is required for DNA replication and normal SOS inducibility. RecF binds preferentially to single-stranded, linear DNA. It also seems to bind ATP. This is DNA replication and repair protein RecF from Streptococcus pneumoniae serotype 4 (strain ATCC BAA-334 / TIGR4).